The primary structure comprises 258 residues: Alpha- and beta-fibrinogenase stejnefibrase-1 (258 aa).

The first 18 residues, 1-18 (MELIRVLANLLILQLSYA), serve as a signal peptide directing secretion. Positions 19 to 24 (QKSSEL) are excised as a propeptide. The 225-residue stretch at 25–249 (IIGGDECNID…HLDWIQNIIA (225 aa)) folds into the Peptidase S1 domain. 6 disulfides stabilise this stretch: cysteine 31–cysteine 163, cysteine 50–cysteine 66, cysteine 98–cysteine 256, cysteine 142–cysteine 210, cysteine 174–cysteine 189, and cysteine 200–cysteine 225. Histidine 65 (charge relay system) is an active-site residue. N-linked (GlcNAc...) asparagine glycosylation is present at asparagine 103. Catalysis depends on aspartate 110, which acts as the Charge relay system. N-linked (GlcNAc...) asparagine glycosylation is found at asparagine 121, asparagine 122, asparagine 154, and asparagine 170. Residue serine 204 is the Charge relay system of the active site.

The protein belongs to the peptidase S1 family. Snake venom subfamily. Monomer. Expressed by the venom gland.

The protein resides in the secreted. Its activity is inhibited by PMSF and p-nitrophenyl-p-guanidinobenzoate (NPGB). Snake venom serine protease. Degrades concomitantly alpha- (FGA) and beta-chains of fibrinogen (FGB). In Trimeresurus stejnegeri (Chinese green tree viper), this protein is Alpha- and beta-fibrinogenase stejnefibrase-1.